A 212-amino-acid polypeptide reads, in one-letter code: Large ribosomal subunit protein uL1 (212 aa).

It belongs to the universal ribosomal protein uL1 family. In terms of assembly, part of the 50S ribosomal subunit.

Its function is as follows. Binds directly to 23S rRNA. Probably involved in E site tRNA release. In terms of biological role, protein L1 is also a translational repressor protein, it controls the translation of its operon by binding to its mRNA. The chain is Large ribosomal subunit protein uL1 from Methanobrevibacter smithii (strain ATCC 35061 / DSM 861 / OCM 144 / PS).